Consider the following 453-residue polypeptide: uncharacterized protein (453 aa).

Cys74, Cys80, Cys83, and Cys162 together coordinate [4Fe-4S] cluster. Gln286, Tyr315, Glu336, and Asp384 together coordinate S-adenosyl-L-methionine. The Nucleophile role is filled by Cys411.

This sequence belongs to the class I-like SAM-binding methyltransferase superfamily. RNA M5U methyltransferase family.

This is an uncharacterized protein from Staphylococcus aureus (strain COL).